Consider the following 489-residue polypeptide: NADH-quinone oxidoreductase subunit N (489 aa).

A run of 14 helical transmembrane segments spans residues 8-28 (LIAM…MLSI), 35-55 (FTIA…LYYV), 75-95 (FFTA…YPWL), 105-125 (FYML…AHHL), 127-147 (SMFI…GYAF), 159-179 (YMLL…LLYA), 203-223 (VLAG…LFPF), 235-255 (PAPT…AVVM), 271-291 (MILG…ALTQ), 303-323 (VSHL…PILA), 329-349 (IYLA…AVAS), 374-394 (AVVM…LGFI), 407-427 (SLWW…FYYL), and 456-476 (LITL…QPLI).

The protein belongs to the complex I subunit 2 family. NDH-1 is composed of 13 different subunits. Subunits NuoA, H, J, K, L, M, N constitute the membrane sector of the complex.

The protein localises to the cell inner membrane. It carries out the reaction a quinone + NADH + 5 H(+)(in) = a quinol + NAD(+) + 4 H(+)(out). NDH-1 shuttles electrons from NADH, via FMN and iron-sulfur (Fe-S) centers, to quinones in the respiratory chain. The immediate electron acceptor for the enzyme in this species is believed to be ubiquinone. Couples the redox reaction to proton translocation (for every two electrons transferred, four hydrogen ions are translocated across the cytoplasmic membrane), and thus conserves the redox energy in a proton gradient. The polypeptide is NADH-quinone oxidoreductase subunit N (Proteus mirabilis (strain HI4320)).